A 414-amino-acid polypeptide reads, in one-letter code: Lysocardiolipin acyltransferase 1 (414 aa).

The next 2 membrane-spanning stretches (helical) occupy residues 47–67 (FILT…SPFL) and 86–106 (ATWL…KVII). Residues 123 to 128 (HRTRMD) carry the HXXXXD motif motif. The residue at position 221 (Lys-221) is an N6-acetyllysine. The next 2 helical transmembrane spans lie at 340–360 (LRVL…SPAM) and 362–382 (LLIY…VIFV).

This sequence belongs to the 1-acyl-sn-glycerol-3-phosphate acyltransferase family. Expressed at higher level in heart, kidney and pancreas than in brain, spleen, liver, lung, small intestine and placenta.

It is found in the endoplasmic reticulum membrane. The catalysed reaction is a 1-acyl-sn-glycero-3-phosphate + an acyl-CoA = a 1,2-diacyl-sn-glycero-3-phosphate + CoA. The enzyme catalyses a 1-acyl-sn-glycero-3-phospho-(1D-myo-inositol) + an acyl-CoA = a 1,2-diacyl-sn-glycero-3-phospho-(1D-myo-inositol) + CoA. It carries out the reaction 1-acyl-sn-glycero-3-phospho-(1'-sn-glycerol) + an acyl-CoA = a 1,2-diacyl-sn-glycero-3-phospho-(1'-sn-glycerol) + CoA. It catalyses the reaction 1-hexadecanoyl-sn-glycero-3-phosphate + (9Z)-octadecenoyl-CoA = 1-hexadecanoyl-2-(9Z-octadecenoyl)-sn-glycero-3-phosphate + CoA. The catalysed reaction is 1-(9Z-octadecenoyl)-sn-glycero-3-phosphate + (9Z)-octadecenoyl-CoA = 1,2-di-(9Z-octadecenoyl)-sn-glycero-3-phosphate + CoA. The enzyme catalyses 1-(9Z,12Z)-octadecadienoyl-sn-glycero-3-phosphate + (9Z)-octadecenoyl-CoA = 1-(9Z,12Z)-octadecadienoyl-2-(9Z)-octadecenoyl-sn-glycero-3-phosphate + CoA. It carries out the reaction 1-(9Z,12Z,15Z)-octadecatrienoyl-sn-glycero-3-phosphate + (9Z)-octadecenoyl-CoA = 1-(9Z,12Z,15Z)-octadecatrienoyl-2-(9Z)-octadecenoyl-sn-glycero-3-phosphate + CoA. It catalyses the reaction 1-(9Z-octadecenoyl)-sn-glycero-3-phosphate + hexadecanoyl-CoA = 1-(9Z)-octadecenoyl-2-hexadecanoyl-sn-glycero-3-phosphate + CoA. The catalysed reaction is 1-(9Z-octadecenoyl)-sn-glycero-3-phosphate + octadecanoyl-CoA = 1-(9Z-octadecenoyl)-2-octadecanoyl-sn-glycero-3-phosphate + CoA. The enzyme catalyses 1-acyl-sn-glycero-3-phospho-(1'-sn-glycerol) + (9Z)-octadecenoyl-CoA = 1-acyl-2-(9Z-octadecenoyl)-sn-glycero-3-phospho-(1'-sn-glycerol) + CoA. It carries out the reaction a 1-acyl-sn-glycero-3-phospho-(1D-myo-inositol) + (9Z)-octadecenoyl-CoA = a 1-acyl-2-(9Z-octadecenoyl)-sn-glycero-3-phospho-(1D-myo-inositol) + CoA. It catalyses the reaction 1-hexadecanoyl-sn-glycero-3-phospho-(1D-myo-inositol) + hexadecanoyl-CoA = 1,2-dihexadecanoyl-sn-glycero-3-phospho-(1D-myo-inositol) + CoA. The catalysed reaction is 1-hexadecanoyl-sn-glycero-3-phospho-(1D-myo-inositol) + octadecanoyl-CoA = 1-hexadecanoyl-2-octadecanoyl-sn-glycero-3-phospho-(1D-myo-inositol) + CoA. The enzyme catalyses 1-hexadecanoyl-sn-glycero-3-phospho-(1D-myo-inositol) + (9Z)-octadecenoyl-CoA = 1-hexadecanoyl-2-(9Z-octadecenoyl)-sn-glycero-3-phospho-(1D-myo-inositol) + CoA. It carries out the reaction 1-hexadecanoyl-sn-glycero-3-phospho-(1D-myo-inositol) + (9Z,12Z)-octadecadienoyl-CoA = 1-hexadecanoyl-2-(9Z,12Z-octadecadienoyl)-sn-glycero-3-phospho-(1D-myo-inositol) + CoA. It catalyses the reaction 1-hexadecanoyl-sn-glycero-3-phospho-(1D-myo-inositol) + (5Z,8Z,11Z,14Z)-eicosatetraenoyl-CoA = 1-hexadecanoyl-2-(5Z,8Z,11Z,14Z-eicosatetraenoyl)-sn-glycero-3-phospho-D-myo-inositol + CoA. The catalysed reaction is 1-hexadecanoyl-sn-glycero-3-phospho-(1'-sn-glycerol) + hexadecanoyl-CoA = 1,2-dihexadecanoyl-sn-glycero-3-phospho-(1'-sn-glycerol) + CoA. The enzyme catalyses 1-hexadecanoyl-sn-glycero-3-phospho-(1'-sn-glycerol) + octadecanoyl-CoA = 1-hexadecanoyl-2-octadecanoyl-sn-glycero-3-phospho-(1'-sn-glycerol) + CoA. It carries out the reaction 1-hexadecanoyl-sn-glycero-3-phospho-(1'-sn-glycerol) + (9Z)-octadecenoyl-CoA = 1-hexadecanoyl-2-(9Z-octadecenoyl)-sn-glycero-3-phospho-(1'-sn-glycerol) + CoA. It catalyses the reaction 1-hexadecanoyl-sn-glycero-3-phospho-(1'-sn-glycerol) + (9Z,12Z)-octadecadienoyl-CoA = 1-hexadecanoyl-2-(9Z,12Z-octadecadienoyl)-sn-glycero-3-phospho-(1'-sn-glycerol) + CoA. The catalysed reaction is 1-tetradecanoyl-sn-glycero-3-phospho-(1'-sn-glycerol) + (9Z)-octadecenoyl-CoA = 1-tetradecanoyl-2-(9Z-octadecenoyl)-sn-glycero-3-phospho-(1'-sn-glycerol) + CoA. The enzyme catalyses 1-octadecanoyl-sn-glycero-3-phospho-(1'-sn-glycerol) + (9Z)-octadecenoyl-CoA = 1-octadecanoyl-2-(9Z-octadecenoyl)-sn-glycero-3-phospho-(1'-sn-glycerol) + CoA. It carries out the reaction 1-(9Z-octadecenoyl)-sn-glycero-3-phospho-(1'-sn-glycerol) + (9Z)-octadecenoyl-CoA = 1,2-di-(9Z-octadecenoyl)-sn-glycero-3-phospho-(1'-sn-glycerol) + CoA. It catalyses the reaction 1-hexadecanoyl-sn-glycero-3-phospho-(1D-myo-inositol) + dodecanoyl-CoA = 1-hexadecanoyl-2-dodecanoyl-sn-glycero-3-phospho-(1D-myo-inositol) + CoA. The catalysed reaction is 1',3'-bis-[1-acyl-sn-glycero-3-phospho]-glycerol + (9Z)-octadecenoyl-CoA = 1'-[1-acyl-2-(9Z)-octadecenoyl-sn-glycero-3-phospho],3'-[1-acyl,2-hydroxy-sn-glycero-3-phospho]-glycerol + CoA. The enzyme catalyses 1'-[1,2-diacyl-sn-glycero-3-phospho],3'-[1-acyl-sn-glycero-3-phospho]-glycerol + (9Z)-octadecenoyl-CoA = 1'-[1,2-diacyl-sn-glycero-3-phospho],3'-[1-acyl,2-(9Z)-octadecenoyl-sn-glycero-3-phospho]-glycerol + CoA. It carries out the reaction 1'-[1,2-diacyl-sn-glycero-3-phospho],3'-[1-acyl-sn-glycero-3-phospho]-glycerol + (9Z,12Z)-octadecadienoyl-CoA = 1'-[1,2-diacyl-sn-glycero-3-phospho],3'-[1-acyl,2-(9Z,12Z)-octadecadienoyl-sn-glycero-3-phospho]-glycerol + CoA. It catalyses the reaction 1'-[1,2-diacyl-sn-glycero-3-phospho],3'-[1-acyl-sn-glycero-3-phospho]-glycerol + dodecanoyl-CoA = 1'-[1,2-diacyl-sn-glycero-3-phospho],3'-[1-acyl,2-dodecanoyl-sn-glycero-3-phospho]-glycerol + CoA. The catalysed reaction is 1',3'-bis-[1-acyl-sn-glycero-3-phospho]-glycerol + dodecanoyl-CoA = 1'-[1-acyl-2-dodecanoyl-sn-glycero-3-phospho],3'-[1-acyl,2-hydroxy-sn-glycero-3-phospho]-glycerol + CoA. The enzyme catalyses a 1-acyl-sn-glycero-3-phosphate + (9Z)-octadecenoyl-CoA = a 1-acyl-2-(9Z-octadecenoyl)-sn-glycero-3-phosphate + CoA. It carries out the reaction 1',3'-bis-[1-acyl-sn-glycero-3-phospho]-glycerol + (9Z,12Z)-octadecadienoyl-CoA = 1'-[1-acyl-2-(9Z,12Z)-octadecadienoyl-sn-glycero-3-phospho],3'-[1-acyl,2-hydroxy-sn-glycero-3-phospho]-glycerol + CoA. It catalyses the reaction 1',3'-bis-[1-acyl-sn-glycero-3-phospho]-glycerol + hexadecanoyl-CoA = 1'-[1-acyl-2-hexadecanoyl-sn-glycero-3-phospho],3'-[1-acyl,2-hydroxy-sn-glycero-3-phospho]-glycerol + CoA. The catalysed reaction is 1',3'-bis-[1-acyl-sn-glycero-3-phospho]-glycerol + octadecanoyl-CoA = 1'-[1-acyl-2-octadecanoyl-sn-glycero-3-phospho],3'-[1-acyl,2-hydroxy-sn-glycero-3-phospho]-glycerol + CoA. The enzyme catalyses 1'-[1,2-diacyl-sn-glycero-3-phospho],3'-[1-acyl-sn-glycero-3-phospho]-glycerol + octanoyl-CoA = 1'-[1,2-diacyl-sn-glycero-3-phospho],3'-[1-acyl,2-octanoyl-sn-glycero-3-phospho]-glycerol + CoA. It carries out the reaction 1',3'-bis-[1-acyl-sn-glycero-3-phospho]-glycerol + octanoyl-CoA = 1'-[1-acyl-2-octanoyl-sn-glycero-3-phospho],3'-[1-acyl,2-hydroxy-sn-glycero-3-phospho]-glycerol + CoA. It catalyses the reaction 1'-[1,2-diacyl-sn-glycero-3-phospho],3'-[1-acyl-sn-glycero-3-phospho]-glycerol + hexadecanoyl-CoA = 1'-[1,2-diacyl-sn-glycero-3-phospho],3'-[1-acyl,2-hexadecanoyl-sn-glycero-3-phospho]-glycerol + CoA. The catalysed reaction is 1'-[1,2-diacyl-sn-glycero-3-phospho],3'-[1-acyl-sn-glycero-3-phospho]-glycerol + (5Z,8Z,11Z,14Z)-eicosatetraenoyl-CoA = 1'-[1,2-diacyl-sn-glycero-3-phospho],3'-[1-acyl,2-(5Z,8Z,11Z,14Z)-eicosatetraenoyl-sn-glycero-3-phospho]-glycerol + CoA. The enzyme catalyses 1',3'-bis-[1-acyl-sn-glycero-3-phospho]-glycerol + (5Z,8Z,11Z,14Z)-eicosatetraenoyl-CoA = 1'-[1-acyl-2-(5Z,8Z,11Z,14Z)-eicosatetraenoyl-sn-glycero-3-phospho],3'-[1-acyl,2-hydroxy-sn-glycero-3-phospho]-glycerol + CoA. It carries out the reaction a 1-acyl-sn-glycero-3-phospho-(1D-myo-inositol) + octadecanoyl-CoA = a 1-acyl-2-octadecanoyl-sn-glycero-3-phospho-(1D-myo-inositol) + CoA. It catalyses the reaction a 2-acyl-sn-glycero-3-phospho-D-myo-inositol + octadecanoyl-CoA = 1-octadecanoyl-2-acyl-sn-glycero-3-phospho-1D-myo-inositol + CoA. It participates in phospholipid metabolism; CDP-diacylglycerol biosynthesis; CDP-diacylglycerol from sn-glycerol 3-phosphate: step 2/3. In terms of biological role, exhibits acyl-CoA:lysocardiolipin acyltransferase (ALCAT) activity; catalyzes the reacylation of lyso-cardiolipin to cardiolipin (CL), a key step in CL remodeling. Recognizes both monolysocardiolipin and dilysocardiolipin as substrates with a preference for linoleoyl-CoA and oleoyl-CoA as acyl donors. Also exhibits 1-acyl-sn-glycerol-3-phosphate acyltransferase activity (AGPAT) activity; converts 1-acyl-sn-glycerol-3- phosphate (lysophosphatidic acid or LPA) into 1,2-diacyl-sn-glycerol-3- phosphate (phosphatidic acid or PA) by incorporating an acyl moiety at the sn-2 position of the glycerol backbone. Possesses both lysophosphatidylinositol acyltransferase (LPIAT) and lysophosphatidylglycerol acyltransferase (LPGAT) activities. Required for establishment of the hematopoietic and endothelial lineages. The protein is Lysocardiolipin acyltransferase 1 (LCLAT1) of Homo sapiens (Human).